Consider the following 535-residue polypeptide: Cytochrome P450 71C3 (535 aa).

The helical transmembrane segment at 23 to 43 (QTLTLLLIAVPTVLLLLASLA) threads the bilayer. Cys475 provides a ligand contact to heme.

Belongs to the cytochrome P450 family. Requires heme as cofactor.

The protein resides in the membrane. It functions in the pathway secondary metabolite biosynthesis; 2,4-dihydroxy-1,4-benzoxazin-3-one biosynthesis; 2,4-dihydroxy-1,4-benzoxazin-3-one from indoleglycerol phosphate: step 5/5. Catalyzes the conversion of 2-hydroxy-1,4-benzoxazin-3-one (HBOA) to 2,4-dihydroxy-1,4-benzoxazin-3-one (DIBOA). This Zea mays (Maize) protein is Cytochrome P450 71C3 (CYP71C3).